The primary structure comprises 310 residues: tRNA-cytidine(32) 2-sulfurtransferase (310 aa).

Residues serine 45–serine 50 carry the PP-loop motif motif. 3 residues coordinate [4Fe-4S] cluster: cysteine 120, cysteine 123, and cysteine 211.

It belongs to the TtcA family. Homodimer. Mg(2+) serves as cofactor. Requires [4Fe-4S] cluster as cofactor.

The protein resides in the cytoplasm. The enzyme catalyses cytidine(32) in tRNA + S-sulfanyl-L-cysteinyl-[cysteine desulfurase] + AH2 + ATP = 2-thiocytidine(32) in tRNA + L-cysteinyl-[cysteine desulfurase] + A + AMP + diphosphate + H(+). Its pathway is tRNA modification. Its function is as follows. Catalyzes the ATP-dependent 2-thiolation of cytidine in position 32 of tRNA, to form 2-thiocytidine (s(2)C32). The sulfur atoms are provided by the cysteine/cysteine desulfurase (IscS) system. The protein is tRNA-cytidine(32) 2-sulfurtransferase of Shewanella baltica (strain OS155 / ATCC BAA-1091).